The chain runs to 462 residues: Protein MOS2 (462 aa).

The span at 1–10 (MKLSFSLPSK) shows a compositional bias: low complexity. Residues 1 to 32 (MKLSFSLPSKSKPKVTATTADGNNAVDDGTSK) form a disordered region. The region spanning 156–202 (VDGFGAALMAGYGWKPGKGIGKNAKEDVEIKEYKKWTAKEGLGFDPD) is the G-patch domain. Residues 231 to 258 (VFFVGKEVRIIAGRDVGLKGKIVEKPGS) form the KOW 1 domain. Basic and acidic residues predominate over residues 301–336 (DREKDKKTSGRGRGAERGSRSEVRASEKQDRGQTRE). The disordered stretch occupies residues 301 to 340 (DREKDKKTSGRGRGAERGSRSEVRASEKQDRGQTRERKVK). A KOW 2 domain is found at 401 to 428 (LPRRGGPVLVLSGKHKGVYGNLVEKDLD).

Belongs to the MOS2 family.

Its subcellular location is the nucleus. In terms of biological role, required for innate and induced resistance to pathogens such as compatible and incompatible isolates of P.syringae and P.parasitica. The protein is Protein MOS2 (MOS2) of Arabidopsis thaliana (Mouse-ear cress).